Consider the following 317-residue polypeptide: Transaldolase (317 aa).

Lysine 131 acts as the Schiff-base intermediate with substrate in catalysis.

It belongs to the transaldolase family. Type 1 subfamily. Homodimer.

It is found in the cytoplasm. The catalysed reaction is D-sedoheptulose 7-phosphate + D-glyceraldehyde 3-phosphate = D-erythrose 4-phosphate + beta-D-fructose 6-phosphate. It participates in carbohydrate degradation; pentose phosphate pathway; D-glyceraldehyde 3-phosphate and beta-D-fructose 6-phosphate from D-ribose 5-phosphate and D-xylulose 5-phosphate (non-oxidative stage): step 2/3. Its function is as follows. Transaldolase is important for the balance of metabolites in the pentose-phosphate pathway. This is Transaldolase from Baumannia cicadellinicola subsp. Homalodisca coagulata.